The following is a 490-amino-acid chain: 4-hydroxybutyryl-CoA dehydratase/vinylacetyl-CoA-Delta-isomerase (490 aa).

[4Fe-4S] cluster is bound by residues cysteine 99 and cysteine 103. FAD is bound by residues 149-156 and 188-190; these read MTDPKGDR and HQT. [4Fe-4S] cluster is bound by residues histidine 292 and cysteine 299. Residues histidine 325 and 386–390 contribute to the FAD site; that span reads DIAGG.

Homotetramer. Requires FAD as cofactor. [4Fe-4S] cluster is required as a cofactor.

It catalyses the reaction 4-hydroxybutanoyl-CoA = (2E)-butenoyl-CoA + H2O. The enzyme catalyses vinylacetyl-CoA = (2E)-butenoyl-CoA. Functionally, catalyzes the reversible conversion of 4-hydroxybutyryl-CoA to crotonyl-CoA. The mechanism of the reaction seems to go through three steps: (1) the FAD-dependent oxidation of 4-hydroxybutyryl-CoA to 4-hydroxycrotonyl-CoA; (2) the hydroxyl group is substituted by a hydride derived from the now reduced FAD in an SN2' reaction leading to vinylacetyl-CoA; (3) isomerization to yield crotonyl-CoA. This is 4-hydroxybutyryl-CoA dehydratase/vinylacetyl-CoA-Delta-isomerase (abfD) from Clostridium aminobutyricum.